We begin with the raw amino-acid sequence, 582 residues long: Proline--tRNA ligase (582 aa).

This sequence belongs to the class-II aminoacyl-tRNA synthetase family. ProS type 1 subfamily. In terms of assembly, homodimer.

The protein localises to the cytoplasm. It carries out the reaction tRNA(Pro) + L-proline + ATP = L-prolyl-tRNA(Pro) + AMP + diphosphate. Functionally, catalyzes the attachment of proline to tRNA(Pro) in a two-step reaction: proline is first activated by ATP to form Pro-AMP and then transferred to the acceptor end of tRNA(Pro). As ProRS can inadvertently accommodate and process non-cognate amino acids such as alanine and cysteine, to avoid such errors it has two additional distinct editing activities against alanine. One activity is designated as 'pretransfer' editing and involves the tRNA(Pro)-independent hydrolysis of activated Ala-AMP. The other activity is designated 'posttransfer' editing and involves deacylation of mischarged Ala-tRNA(Pro). The misacylated Cys-tRNA(Pro) is not edited by ProRS. The polypeptide is Proline--tRNA ligase (Mycobacterium ulcerans (strain Agy99)).